Consider the following 689-residue polypeptide: Glycine--tRNA ligase beta subunit (689 aa).

It belongs to the class-II aminoacyl-tRNA synthetase family. As to quaternary structure, tetramer of two alpha and two beta subunits.

Its subcellular location is the cytoplasm. The catalysed reaction is tRNA(Gly) + glycine + ATP = glycyl-tRNA(Gly) + AMP + diphosphate. This Serratia proteamaculans (strain 568) protein is Glycine--tRNA ligase beta subunit.